The chain runs to 209 residues: MPVLEVLHPLVRHKVGLLRAADISTKKFREITAEIARLLAYEATADFPLEQVTVECWSGPTAVDQIKGKKVTIVPILRAGLGMMDGVLDMIPNAKISVVGLSRNHDTLQPEHYFENLVGSLEERTALIIDPMLATAGSMIATVDLLKRKGCRDIRALVLVAAPEGVKALSAAHPEVRCWTAAIDSHLNEVGYIIPGLGDAGDKIFGTKG.

Residues R78, R103, and 130–138 each bind 5-phospho-alpha-D-ribose 1-diphosphate; that span reads DPMLATAGS. Uracil is bound by residues I193 and 198 to 200; that span reads GDA. 5-phospho-alpha-D-ribose 1-diphosphate is bound at residue D199.

This sequence belongs to the UPRTase family. Requires Mg(2+) as cofactor.

The enzyme catalyses UMP + diphosphate = 5-phospho-alpha-D-ribose 1-diphosphate + uracil. The protein operates within pyrimidine metabolism; UMP biosynthesis via salvage pathway; UMP from uracil: step 1/1. Its activity is regulated as follows. Allosterically activated by GTP. In terms of biological role, catalyzes the conversion of uracil and 5-phospho-alpha-D-ribose 1-diphosphate (PRPP) to UMP and diphosphate. This Methylibium petroleiphilum (strain ATCC BAA-1232 / LMG 22953 / PM1) protein is Uracil phosphoribosyltransferase.